Reading from the N-terminus, the 235-residue chain is Isoprenyl transferase (235 aa).

The active site involves Asp21. Mg(2+) is bound at residue Asp21. Substrate-binding positions include 22–25 (GNAR), Trp26, Lys34, His38, and 66–68 (SSE). Asn69 (proton acceptor) is an active-site residue. Substrate is bound by residues Trp70, Arg72, Arg183, and 189–191 (RIS). Glu202 contributes to the Mg(2+) binding site.

The protein belongs to the UPP synthase family. In terms of assembly, homodimer. The cofactor is Mg(2+).

In terms of biological role, catalyzes the condensation of isopentenyl diphosphate (IPP) with allylic pyrophosphates generating different type of terpenoids. In Rickettsia felis (strain ATCC VR-1525 / URRWXCal2) (Rickettsia azadi), this protein is Isoprenyl transferase.